The chain runs to 160 residues: Cathelin-related peptide SC5 (160 aa).

An N-terminal signal peptide occupies residues 1–29; that stretch reads METQRASLSLGRRSLWLLLLGLVLASASA. A propeptide spanning residues 30–131 is cleaved from the precursor; sequence QALSYREAVL…DITCAEPQSV (102 aa). 2 disulfide bridges follow: cysteine 86/cysteine 97 and cysteine 108/cysteine 125.

The protein belongs to the cathelicidin family.

The protein localises to the secreted. Its function is as follows. Broad spectrum bactericidal agent. This is Cathelin-related peptide SC5 from Ovis aries (Sheep).